Consider the following 2156-residue polypeptide: Probable capsid protein 3 (2156 aa).

The disordered stretch occupies residues 1319 to 1345 (NKSNKSNKSNESDKSSESDKSSESSNH). Residues 1326–1345 (KSNESDKSSESDKSSESSNH) show a composition bias toward basic and acidic residues.

Belongs to the NCLDV major capsid protein family.

Its subcellular location is the virion. The chain is Probable capsid protein 3 from Acanthamoeba polyphaga mimivirus (APMV).